A 254-amino-acid chain; its full sequence is 3-deoxy-manno-octulosonate cytidylyltransferase (254 aa).

This sequence belongs to the KdsB family.

The protein resides in the cytoplasm. The enzyme catalyses 3-deoxy-alpha-D-manno-oct-2-ulosonate + CTP = CMP-3-deoxy-beta-D-manno-octulosonate + diphosphate. The protein operates within nucleotide-sugar biosynthesis; CMP-3-deoxy-D-manno-octulosonate biosynthesis; CMP-3-deoxy-D-manno-octulosonate from 3-deoxy-D-manno-octulosonate and CTP: step 1/1. Its pathway is bacterial outer membrane biogenesis; lipopolysaccharide biosynthesis. Functionally, activates KDO (a required 8-carbon sugar) for incorporation into bacterial lipopolysaccharide in Gram-negative bacteria. This chain is 3-deoxy-manno-octulosonate cytidylyltransferase, found in Pseudomonas fluorescens (strain ATCC BAA-477 / NRRL B-23932 / Pf-5).